We begin with the raw amino-acid sequence, 352 residues long: Mitochondrial hydrolase YKR070W (352 aa).

The protein belongs to the HAD-like hydrolase superfamily.

The protein localises to the mitochondrion. This chain is Mitochondrial hydrolase YKR070W, found in Saccharomyces cerevisiae (strain ATCC 204508 / S288c) (Baker's yeast).